Here is a 192-residue protein sequence, read N- to C-terminus: Pyridoxal 5'-phosphate synthase subunit PdxT (192 aa).

Residue 47-49 (GES) coordinates L-glutamine. Residue Cys-79 is the Nucleophile of the active site. L-glutamine contacts are provided by residues Arg-106 and 134-135 (IR). Catalysis depends on charge relay system residues His-170 and Glu-172.

It belongs to the glutaminase PdxT/SNO family. In the presence of PdxS, forms a dodecamer of heterodimers. Only shows activity in the heterodimer.

It carries out the reaction aldehydo-D-ribose 5-phosphate + D-glyceraldehyde 3-phosphate + L-glutamine = pyridoxal 5'-phosphate + L-glutamate + phosphate + 3 H2O + H(+). The catalysed reaction is L-glutamine + H2O = L-glutamate + NH4(+). It participates in cofactor biosynthesis; pyridoxal 5'-phosphate biosynthesis. In terms of biological role, catalyzes the hydrolysis of glutamine to glutamate and ammonia as part of the biosynthesis of pyridoxal 5'-phosphate. The resulting ammonia molecule is channeled to the active site of PdxS. The protein is Pyridoxal 5'-phosphate synthase subunit PdxT of Geobacillus sp. (strain WCH70).